The following is a 333-amino-acid chain: Probable ABC transporter permease protein y4mJ (333 aa).

The next 10 helical transmembrane spans lie at 30–50 (LAIA…VPQA), 62–82 (AGAP…TGGI), 84–104 (LSVG…MASG), 110–130 (ALIG…LVTV), 133–153 (LAPF…AFIV), 175–195 (IPGV…IEIF), 228–248 (FAYV…ISYI), 253–273 (STAG…GGAS), 274–294 (LLGG…ITVI), and 300–320 (LIGI…LIAV).

The protein belongs to the binding-protein-dependent transport system permease family. AraH/RbsC subfamily.

Its subcellular location is the cell inner membrane. Its function is as follows. Probably part of the binding-protein-dependent transport system y4mIJK. This system probably transports a sugar. Probably responsible for the translocation of the substrate across the membrane. The protein is Probable ABC transporter permease protein y4mJ of Sinorhizobium fredii (strain NBRC 101917 / NGR234).